Consider the following 233-residue polypeptide: Probable septum site-determining protein MinC (233 aa).

The tract at residues 104-124 is disordered; it reads QKMATPEPAPAPAPVVDPNAP.

This sequence belongs to the MinC family. Interacts with MinD and FtsZ.

In terms of biological role, cell division inhibitor that blocks the formation of polar Z ring septums. Rapidly oscillates between the poles of the cell to destabilize FtsZ filaments that have formed before they mature into polar Z rings. Prevents FtsZ polymerization. This is Probable septum site-determining protein MinC from Serratia proteamaculans (strain 568).